The chain runs to 132 residues: Glycine cleavage system H protein (132 aa).

The region spanning 24–106 (IATIGLSAFA…YGDGWLIKVR (83 aa)) is the Lipoyl-binding domain. Residue K65 is modified to N6-lipoyllysine.

Belongs to the GcvH family. As to quaternary structure, the glycine cleavage system is composed of four proteins: P, T, L and H. It depends on (R)-lipoate as a cofactor.

The glycine cleavage system catalyzes the degradation of glycine. The H protein shuttles the methylamine group of glycine from the P protein to the T protein. This chain is Glycine cleavage system H protein, found in Rippkaea orientalis (strain PCC 8801 / RF-1) (Cyanothece sp. (strain PCC 8801)).